The primary structure comprises 238 residues: Probable transcriptional regulatory protein SUB0364 (238 aa).

Belongs to the TACO1 family. YeeN subfamily.

The protein localises to the cytoplasm. The polypeptide is Probable transcriptional regulatory protein SUB0364 (Streptococcus uberis (strain ATCC BAA-854 / 0140J)).